Consider the following 1001-residue polypeptide: MPSTNRAGSLKDPEIAELFFKEDPEKLFTDLREIGHGSFGAVYFARDVRTNEVVAIKKMSYSGKQSTEKWQDIIKEVKFLQRIKHPNSIEYKGCYLREHTAWLVMEYCLGSASDLLEVHKKPLQEVEIAAITHGALQGLAYLHSHTMIHRDIKAGNILLTEPGQVKLADFGSASMASPANSFVGTPYWMAPEVILAMDEGQYDGKVDVWSLGITCIELAERKPPLFNMNAMSALYHIAQNESPTLQSNEWSDYFRNFVDSCLQKIPQDRPTSEELLKHMFVLRERPETVLIDLIQRTKDAVRELDNLQYRKMKKLLFQEAHNGPAVEAQEEEEEQDHGGGRTGTVNSVGSNQSIPSMSISASSQSSSVNSLPDASDDKSELDMMEGDHTVMSNSSVIHLKPEEENYQEEGDPRTRASAPQSPPQVSRHKSHYRNREHFATIRTASLVTRQMQEHEQDSELREQMSGYKRMRRQHQKQLMTLENKLKAEMDEHRLRLDKDLETQRNNFAAEMEKLIKKHQASMEKEAKVMANEEKKFQQHIQAQQKKELNSFLESQKREYKLRKEQLKEELNENQSTPKKEKQEWLSKQKENIQHFQAEEEANLLRRQRQYLELECRRFKRRMLLGRHNLEQDLVREELNKRQTQKDLEHAMLLRQHESMQELEFRHLNTIQKMRCELIRLQHQTELTNQLEYNKRRERELRRKHVMEVRQQPKSLKSKELQIKKQFQDTCKIQTRQYKALRNHLLETTPKSEHKAVLKRLKEEQTRKLAILAEQYDHSINEMLSTQALRLDEAQEAECQVLKMQLQQELELLNAYQSKIKMQAEAQHDRELRELEQRVSLRRALLEQKIEEEMLALQNERTERIRSLLERQAREIEAFDSESMRLGFSNMVLSNLSPEAFSHSYPGASSWSHNPTGGSGPHWGHPMGGTPQAWGHPMQGGPQPWGHPSGPMQGVPRGSSIGVRNSPQALRRTASGGRTEQGMSRSTSVTSQISNGSHMSYT.

Position 9 is a phosphoserine (Ser-9). Residues 28–281 enclose the Protein kinase domain; it reads FTDLREIGHG…SEELLKHMFV (254 aa). ATP is bound by residues 34 to 42 and Lys-57; that span reads IGHGSFGAV. Asp-151 (proton acceptor) is an active-site residue. Disordered regions lie at residues 324 to 380 and 404 to 431; these read PAVE…DKSE and ENYQ…HKSH. The span at 350–370 shows a compositional bias: low complexity; that stretch reads SNQSIPSMSISASSQSSSVNS. A phosphoserine mark is found at Ser-421 and Ser-445. Residues 458 to 651 are a coiled coil; it reads SELREQMSGY…QTQKDLEHAM (194 aa). Residues 567–587 form a disordered region; the sequence is KEELNENQSTPKKEKQEWLSK. A compositionally biased stretch (basic and acidic residues) spans 577 to 587; that stretch reads PKKEKQEWLSK. Thr-669 carries the phosphothreonine modification. Positions 754-877 form a coiled coil; it reads KAVLKRLKEE…LERQAREIEA (124 aa). Residues 905-1001 are disordered; it reads PGASSWSHNP…ISNGSHMSYT (97 aa). Polar residues predominate over residues 906 to 915; sequence GASSWSHNPT. A Phosphoserine modification is found at Ser-965. The segment covering 975–1001 has biased composition (polar residues); that stretch reads GGRTEQGMSRSTSVTSQISNGSHMSYT.

Belongs to the protein kinase superfamily. STE Ser/Thr protein kinase family. STE20 subfamily. In terms of assembly, self-associates. Interacts with MAP2K3. Interacts with SPRED1. Interacts with TESK1; the interaction inhibits TAOK1 kinase activity. Interacts with MAP3K7. Post-translationally, proteolytically processed by caspase-3 (CASP3). Autophosphorylated. Phosphorylated by ATM in response to DNA damage. Phosphorylated by LRRK2.

Its subcellular location is the cytoplasm. It carries out the reaction L-seryl-[protein] + ATP = O-phospho-L-seryl-[protein] + ADP + H(+). The enzyme catalyses L-threonyl-[protein] + ATP = O-phospho-L-threonyl-[protein] + ADP + H(+). With respect to regulation, serine/threonine-protein kinase activity is inhibited by SPRED1. Functionally, serine/threonine-protein kinase involved in various processes such as p38/MAPK14 stress-activated MAPK cascade, DNA damage response and regulation of cytoskeleton stability. Phosphorylates MAP2K3, MAP2K6 and MARK2. Acts as an activator of the p38/MAPK14 stress-activated MAPK cascade by mediating phosphorylation and subsequent activation of the upstream MAP2K3 and MAP2K6 kinases. Involved in G-protein coupled receptor signaling to p38/MAPK14. In response to DNA damage, involved in the G2/M transition DNA damage checkpoint by activating the p38/MAPK14 stress-activated MAPK cascade, probably by mediating phosphorylation of MAP2K3 and MAP2K6. Acts as a regulator of cytoskeleton stability by phosphorylating 'Thr-208' of MARK2, leading to activate MARK2 kinase activity and subsequent phosphorylation and detachment of MAPT/TAU from microtubules. Also acts as a regulator of apoptosis: regulates apoptotic morphological changes, including cell contraction, membrane blebbing and apoptotic bodies formation via activation of the MAPK8/JNK cascade. During fetal development, it plays an essential role in the regulation of neuronal differentiation and migration to the cortical plate. The chain is Serine/threonine-protein kinase TAO1 (Taok1) from Rattus norvegicus (Rat).